We begin with the raw amino-acid sequence, 672 residues long: Methionine--tRNA ligase (672 aa).

Positions Ala12–His22 match the 'HIGH' region motif. Zn(2+)-binding residues include Cys144, Cys147, Cys156, and Cys159. Residues Lys330–Ser334 carry the 'KMSKS' region motif. Thr333 is an ATP binding site. A tRNA-binding domain is found at Asp573–Cys672.

This sequence belongs to the class-I aminoacyl-tRNA synthetase family. MetG type 1 subfamily. In terms of assembly, homodimer. The cofactor is Zn(2+).

The protein localises to the cytoplasm. It catalyses the reaction tRNA(Met) + L-methionine + ATP = L-methionyl-tRNA(Met) + AMP + diphosphate. Is required not only for elongation of protein synthesis but also for the initiation of all mRNA translation through initiator tRNA(fMet) aminoacylation. In Methanococcus aeolicus (strain ATCC BAA-1280 / DSM 17508 / OCM 812 / Nankai-3), this protein is Methionine--tRNA ligase.